The primary structure comprises 366 residues: Sodium-potassium/proton antiporter ChaA (366 aa).

Over 1–16 (MSNAQEAVKTRHKETS) the chain is Cytoplasmic. 2 consecutive transmembrane segments (helical) span residues 17–37 (LIFP…QTLP) and 38–58 (VVIA…FSVV). Over 59-74 (RHADVLAHRLGEPYGS) the chain is Cytoplasmic. Residues 75 to 95 (LILSLSVVILEVSLISALMAT) form a helical membrane-spanning segment. Residues 96–106 (GDAAPTLMRDT) are Periplasmic-facing. A helical transmembrane segment spans residues 107–127 (LYSIIMIVTGGLVGFSLLLGG). Residues 128–143 (RKFATQYMNLFGIKQY) are Cytoplasmic-facing. The helical transmembrane segment at 144 to 164 (LIALFPLAIIVLVFPMALPAA) threads the bilayer. The Periplasmic portion of the chain corresponds to 165–167 (NFS). A helical membrane pass occupies residues 168-188 (TGQALLVALISAAMYGVFLLI). Residues 189-216 (QTKTHQSLFVYEHEDDSDDDDPHHGKPS) lie on the Cytoplasmic side of the membrane. The helical transmembrane segment at 217–237 (AHSSLWHAIWLIIHLIAVIAV) threads the bilayer. Topologically, residues 238–255 (TKMNASSLETLLDSMNAP) are periplasmic. Residues 256–276 (VAFTGFLVALLILSPEGLGAL) traverse the membrane as a helical segment. The Cytoplasmic segment spans residues 277 to 290 (KAVLNNQVQRAMNL). Residues 291–311 (FFGSVLATISLTVPVVTLIAF) traverse the membrane as a helical segment. Topologically, residues 312 to 318 (MTGNELQ) are periplasmic. The helical transmembrane segment at 319 to 339 (FALGAPEMVVMVASLVLCHIS) threads the bilayer. The Cytoplasmic segment spans residues 340–345 (FSTGRT). A helical membrane pass occupies residues 346–366 (NVLNGAAHLALFAAYLMTIFA).

This sequence belongs to the Ca(2+):cation antiporter (CaCA) (TC 2.A.19) family.

It localises to the cell inner membrane. The enzyme catalyses Na(+)(in) + H(+)(out) = Na(+)(out) + H(+)(in). It catalyses the reaction K(+)(in) + H(+)(out) = K(+)(out) + H(+)(in). The catalysed reaction is Ca(2+)(in) + H(+)(out) = Ca(2+)(out) + H(+)(in). Its activity is regulated as follows. Pronounced pH dependence with sodium as substrate. Ca(2+)/H(+) and Na(+)/H(+) antiporter activities are both inhibited by magnesium. Ca(2+)/H(+) activity is inhibited by the proton ionophore carbonyl cyanide m-chlorophenylhydrazone (CCCP). In terms of biological role, sodium exporter that functions mainly at alkaline pH. Can also function as a potassium/proton and calcium/proton antiporter at alkaline pH. Does not play a major role in calcium export. The K(+)/H(+) antiporter activity may enable E.coli to adapt to K(+) salinity stress and to maintain K(+) homeostasis. This chain is Sodium-potassium/proton antiporter ChaA, found in Escherichia coli (strain K12).